The following is a 189-amino-acid chain: Elongation factor P (189 aa).

At K34 the chain carries N6-(3,6-diaminohexanoyl)-5-hydroxylysine.

This sequence belongs to the elongation factor P family. May be beta-lysylated on the epsilon-amino group of Lys-34 by the combined action of EpmA and EpmB, and then hydroxylated on the C5 position of the same residue by EpmC (if this protein is present). Lysylation is critical for the stimulatory effect of EF-P on peptide-bond formation. The lysylation moiety may extend toward the peptidyltransferase center and stabilize the terminal 3-CCA end of the tRNA. Hydroxylation of the C5 position on Lys-34 may allow additional potential stabilizing hydrogen-bond interactions with the P-tRNA.

The protein localises to the cytoplasm. It participates in protein biosynthesis; polypeptide chain elongation. Its function is as follows. Involved in peptide bond synthesis. Alleviates ribosome stalling that occurs when 3 or more consecutive Pro residues or the sequence PPG is present in a protein, possibly by augmenting the peptidyl transferase activity of the ribosome. Modification of Lys-34 is required for alleviation. This chain is Elongation factor P, found in Legionella pneumophila (strain Lens).